Reading from the N-terminus, the 774-residue chain is MGQKRQRDSKSSGFQSKKRKRAANDNAAADANDGWDGIVGADELNWTEVALPDRLEDAGGFFGLEEIEGVDIVRNPGNGEVRFKAKAGKPKKSVLKTKAPEEEETTHDDEWSGFSDNDTDAPETKPSPAVEEVGESDKKVDLKEAKEANKKDKKKEAKQLKKEQKEKGSAIQHDSSIKAGMSFAALQDAEEDDGVDVSAWDALNLSTELLTGISKMKFTSPTAVQAACIPHILDGHDVVGKASTGSGKTLAFGIPILEHYLEKNRDGHGDIIGKKDKKDSTPIALILSPTRELAHQLAKHIGELVTQAPGVNARIALLTGGLSVQKQQRLLAGADIVIGTPGRVWEIMSTGQGLIRKMQKIKFLVVDEADRLLSEGHFKEVEEIIGALDRVEDGDVLDEEDEAPEEESDPRSERQTLVFSATFHRDLQQKLAGKGKWTGGDIMNKKESMDYLLQKLNFREEKPKFIDTNPVSQMAENLKEGIVECGAMEKDLFLYTLLLYHPKHRTLVFTNSISAVRRLAQLLQALQLPALALHSSMAQKARLRSVERFSSPTANPGTILIATDVAARGLDIKGIDLVIHYHAPRTADTYVHRSGRTARAGASGKSVIICGPDEMVGVVRLAAKVHANMANGKRLPLESLELDRRVVGRVKPRVSLASRIVDANIAKEKISSEDNWLRNAAEDLGVEYDSEEFDEAEGKGRGRGRGRQQKQKEAGSVSKAELAGLRAELKQLLSQRVNVGVSERYLTAGRVDIEALLRGEGNASFLGPVDPLGF.

A compositionally biased stretch (basic and acidic residues) spans 1–10 (MGQKRQRDSK). Disordered stretches follow at residues 1 to 38 (MGQK…WDGI) and 73 to 174 (VRNP…IQHD). A compositionally biased stretch (basic residues) spans 84 to 95 (KAKAGKPKKSVL). The segment covering 135-168 (ESDKKVDLKEAKEANKKDKKKEAKQLKKEQKEKG) has biased composition (basic and acidic residues). Positions 198 to 226 (SAWDALNLSTELLTGISKMKFTSPTAVQA) match the Q motif motif. The 213-residue stretch at 229-441 (IPHILDGHDV…AGKGKWTGGD (213 aa)) folds into the Helicase ATP-binding domain. 242–249 (ASTGSGKT) is an ATP binding site. The short motif at 367-370 (DEAD) is the DEAD box element. A compositionally biased stretch (acidic residues) spans 395-408 (DVLDEEDEAPEEES). The interval 395 to 414 (DVLDEEDEAPEEESDPRSER) is disordered. One can recognise a Helicase C-terminal domain in the interval 493-643 (FLYTLLLYHP…RLPLESLELD (151 aa)). Positions 689–717 (DSEEFDEAEGKGRGRGRGRQQKQKEAGSV) are disordered.

The protein belongs to the DEAD box helicase family. DDX24/MAK5 subfamily.

It localises to the nucleus. The protein localises to the nucleolus. The catalysed reaction is ATP + H2O = ADP + phosphate + H(+). ATP-binding RNA helicase involved in the biogenesis of 60S ribosomal subunits and is required for the normal formation of 25S and 5.8S rRNAs. This chain is ATP-dependent RNA helicase mak5 (mak5), found in Aspergillus clavatus (strain ATCC 1007 / CBS 513.65 / DSM 816 / NCTC 3887 / NRRL 1 / QM 1276 / 107).